The primary structure comprises 424 residues: Enolase (424 aa).

Residue Gln165 coordinates (2R)-2-phosphoglycerate. Glu207 functions as the Proton donor in the catalytic mechanism. Asp244, Glu283, and Asp310 together coordinate Mg(2+). (2R)-2-phosphoglycerate-binding residues include Lys335, Arg364, Ser365, and Lys386. Lys335 serves as the catalytic Proton acceptor.

Belongs to the enolase family. The cofactor is Mg(2+).

Its subcellular location is the cytoplasm. The protein localises to the secreted. It is found in the cell surface. The enzyme catalyses (2R)-2-phosphoglycerate = phosphoenolpyruvate + H2O. It participates in carbohydrate degradation; glycolysis; pyruvate from D-glyceraldehyde 3-phosphate: step 4/5. Functionally, catalyzes the reversible conversion of 2-phosphoglycerate (2-PG) into phosphoenolpyruvate (PEP). It is essential for the degradation of carbohydrates via glycolysis. In Chlamydia muridarum (strain MoPn / Nigg), this protein is Enolase.